The primary structure comprises 251 residues: Tungstate/molybdate/chromate-binding protein ModA (251 aa).

The first 23 residues, 1-23 (MTTRLPQLLLALLASAVSLAASA), serve as a signal peptide directing secretion. Molybdate-binding residues include threonine 60 and isoleucine 168.

This sequence belongs to the bacterial solute-binding protein ModA family. The complex is composed of two ATP-binding proteins (ModC), two transmembrane proteins (ModB) and a solute-binding protein (ModA).

Its subcellular location is the periplasm. Its function is as follows. Part of the ABC transporter complex ModABC involved in the transport of molybdenum into the cell. Binds tungstate and molybdate. Can also bind chromate, with lower affinity. Plays an essential role in recruitment of molybdate for nitrate reduction. This Pseudomonas aeruginosa (strain ATCC 15692 / DSM 22644 / CIP 104116 / JCM 14847 / LMG 12228 / 1C / PRS 101 / PAO1) protein is Tungstate/molybdate/chromate-binding protein ModA.